The sequence spans 99 residues: Integration host factor subunit alpha (99 aa).

Residues 49-73 form a disordered region; it reads FGNFDLRDKNQRPGRNPKTGEDIPI.

The protein belongs to the bacterial histone-like protein family. In terms of assembly, heterodimer of an alpha and a beta chain.

Its function is as follows. This protein is one of the two subunits of integration host factor, a specific DNA-binding protein that functions in genetic recombination as well as in transcriptional and translational control. In Serratia marcescens, this protein is Integration host factor subunit alpha (ihfA).